Consider the following 511-residue polypeptide: Cysteine--tRNA ligase 2, cytoplasmic (511 aa).

Cysteine 34 lines the Zn(2+) pocket. A 'HIGH' region motif is present at residues 36–46; the sequence is ITAYDFSHIGH. Positions 214, 239, and 243 each coordinate Zn(2+). Residues 271-275 carry the 'KMSKS' region motif; sequence KMAKS. Residue lysine 274 coordinates ATP. 2 TPR repeats span residues 315–348 and 368–401; these read ESSS…DGGK and SKML…LKKM.

It belongs to the class-I aminoacyl-tRNA synthetase family. Requires Zn(2+) as cofactor.

Its subcellular location is the cytoplasm. The protein resides in the cytosol. The enzyme catalyses tRNA(Cys) + L-cysteine + ATP = L-cysteinyl-tRNA(Cys) + AMP + diphosphate. The chain is Cysteine--tRNA ligase 2, cytoplasmic from Arabidopsis thaliana (Mouse-ear cress).